A 341-amino-acid chain; its full sequence is Ferredoxin--NADP reductase (341 aa).

Positions 38, 46, 51, 91, 125, 292, and 333 each coordinate FAD.

Belongs to the ferredoxin--NADP reductase type 2 family. As to quaternary structure, homodimer. Requires FAD as cofactor.

It carries out the reaction 2 reduced [2Fe-2S]-[ferredoxin] + NADP(+) + H(+) = 2 oxidized [2Fe-2S]-[ferredoxin] + NADPH. The polypeptide is Ferredoxin--NADP reductase (Gluconacetobacter diazotrophicus (strain ATCC 49037 / DSM 5601 / CCUG 37298 / CIP 103539 / LMG 7603 / PAl5)).